We begin with the raw amino-acid sequence, 256 residues long: Trans-aconitate 2-methyltransferase (256 aa).

Belongs to the methyltransferase superfamily. Tam family.

It localises to the cytoplasm. The catalysed reaction is trans-aconitate + S-adenosyl-L-methionine = (E)-3-(methoxycarbonyl)pent-2-enedioate + S-adenosyl-L-homocysteine. Catalyzes the S-adenosylmethionine monomethyl esterification of trans-aconitate. This Rhodopseudomonas palustris (strain BisA53) protein is Trans-aconitate 2-methyltransferase.